Here is a 443-residue protein sequence, read N- to C-terminus: Phosphoglucosamine mutase (443 aa).

Residue Ser101 is the Phosphoserine intermediate of the active site. Mg(2+) is bound by residues Ser101, Asp239, Asp241, and Asp243. The residue at position 101 (Ser101) is a Phosphoserine.

Belongs to the phosphohexose mutase family. The cofactor is Mg(2+). In terms of processing, activated by phosphorylation.

It carries out the reaction alpha-D-glucosamine 1-phosphate = D-glucosamine 6-phosphate. Functionally, catalyzes the conversion of glucosamine-6-phosphate to glucosamine-1-phosphate. This is Phosphoglucosamine mutase from Francisella tularensis subsp. tularensis (strain WY96-3418).